Here is a 270-residue protein sequence, read N- to C-terminus: Type III pantothenate kinase (270 aa).

6–13 (DAGNTNIV) is an ATP binding site. 107–110 (GADR) serves as a coordination point for substrate. The Proton acceptor role is filled by Asp-109. Asp-129 is a binding site for K(+). Thr-132 provides a ligand contact to ATP. Thr-184 is a binding site for substrate.

The protein belongs to the type III pantothenate kinase family. In terms of assembly, homodimer. NH4(+) serves as cofactor. K(+) is required as a cofactor.

It localises to the cytoplasm. It catalyses the reaction (R)-pantothenate + ATP = (R)-4'-phosphopantothenate + ADP + H(+). It participates in cofactor biosynthesis; coenzyme A biosynthesis; CoA from (R)-pantothenate: step 1/5. Catalyzes the phosphorylation of pantothenate (Pan), the first step in CoA biosynthesis. This is Type III pantothenate kinase from Gluconobacter oxydans (strain 621H) (Gluconobacter suboxydans).